Consider the following 409-residue polypeptide: Gamma-glutamyl phosphate reductase (409 aa).

Belongs to the gamma-glutamyl phosphate reductase family.

It is found in the cytoplasm. The enzyme catalyses L-glutamate 5-semialdehyde + phosphate + NADP(+) = L-glutamyl 5-phosphate + NADPH + H(+). The protein operates within amino-acid biosynthesis; L-proline biosynthesis; L-glutamate 5-semialdehyde from L-glutamate: step 2/2. Catalyzes the NADPH-dependent reduction of L-glutamate 5-phosphate into L-glutamate 5-semialdehyde and phosphate. The product spontaneously undergoes cyclization to form 1-pyrroline-5-carboxylate. The protein is Gamma-glutamyl phosphate reductase of Bartonella tribocorum (strain CIP 105476 / IBS 506).